A 127-amino-acid chain; its full sequence is Large ribosomal subunit protein uL22 (127 aa).

This sequence belongs to the universal ribosomal protein uL22 family. In terms of assembly, part of the 50S ribosomal subunit.

Functionally, this protein binds specifically to 23S rRNA; its binding is stimulated by other ribosomal proteins, e.g. L4, L17, and L20. It is important during the early stages of 50S assembly. It makes multiple contacts with different domains of the 23S rRNA in the assembled 50S subunit and ribosome. In terms of biological role, the globular domain of the protein is located near the polypeptide exit tunnel on the outside of the subunit, while an extended beta-hairpin is found that lines the wall of the exit tunnel in the center of the 70S ribosome. The polypeptide is Large ribosomal subunit protein uL22 (Methylorubrum populi (strain ATCC BAA-705 / NCIMB 13946 / BJ001) (Methylobacterium populi)).